An 809-amino-acid polypeptide reads, in one-letter code: Leucine--tRNA ligase (809 aa).

Positions 40-51 (PYPSGQGLHVGH) match the 'HIGH' region motif. The short motif at 581–585 (KMSKS) is the 'KMSKS' region element. K584 contributes to the ATP binding site.

It belongs to the class-I aminoacyl-tRNA synthetase family.

Its subcellular location is the cytoplasm. It catalyses the reaction tRNA(Leu) + L-leucine + ATP = L-leucyl-tRNA(Leu) + AMP + diphosphate. The protein is Leucine--tRNA ligase of Levilactobacillus brevis (strain ATCC 367 / BCRC 12310 / CIP 105137 / JCM 1170 / LMG 11437 / NCIMB 947 / NCTC 947) (Lactobacillus brevis).